The following is a 333-amino-acid chain: Acetyltransferase Pat (333 aa).

Residues 85–88, 95–96, and arginine 135 contribute to the 3',5'-cyclic AMP site; these read GEIA and RT. In terms of domain architecture, N-acetyltransferase spans 153–317; sequence FYLRPVLPGD…DTVPFEPELI (165 aa). Glutamate 211 contacts Mg(2+). Residues 237-239, 245-250, asparagine 276, and arginine 285 contribute to the substrate site; these read FTV and GRGIGS.

In terms of assembly, homodimer. Mg(2+) serves as cofactor.

Its activity is regulated as follows. Allosterically regulated by cAMP. In terms of biological role, catalyzes specifically the acetylation of the epsilon-amino group of a highly conserved lysine residue in acetyl-CoA synthetase (ACS) and of the universal stress protein (USP) MSMEG_4207. Acetylation results in the inactivation of ACS activity and could be important for mycobacteria to adjust to environmental changes. The polypeptide is Acetyltransferase Pat (Mycolicibacterium smegmatis (strain ATCC 700084 / mc(2)155) (Mycobacterium smegmatis)).